The primary structure comprises 142 residues: Putative pre-16S rRNA nuclease (142 aa).

Belongs to the YqgF nuclease family.

The protein localises to the cytoplasm. Functionally, could be a nuclease involved in processing of the 5'-end of pre-16S rRNA. This chain is Putative pre-16S rRNA nuclease, found in Staphylococcus haemolyticus (strain JCSC1435).